The following is a 966-amino-acid chain: Valine--tRNA ligase (966 aa).

The 'HIGH' region motif lies at 48–58; that stretch reads PNITGGLHLGH. Positions 348-368 form a coiled coil; that stretch reads DYKDARKKIIEECKRLKILED. The 'KMSKS' region motif lies at 566–570; it reads KMSKS. Lysine 569 serves as a coordination point for ATP. Residues 939 to 960 are a coiled coil; it reads FKKSQEKLNHYNKTKNKLLNQY.

The protein belongs to the class-I aminoacyl-tRNA synthetase family. ValS type 1 subfamily. As to quaternary structure, monomer.

The protein resides in the cytoplasm. The enzyme catalyses tRNA(Val) + L-valine + ATP = L-valyl-tRNA(Val) + AMP + diphosphate. Its function is as follows. Catalyzes the attachment of valine to tRNA(Val). As ValRS can inadvertently accommodate and process structurally similar amino acids such as threonine, to avoid such errors, it has a 'posttransfer' editing activity that hydrolyzes mischarged Thr-tRNA(Val) in a tRNA-dependent manner. The sequence is that of Valine--tRNA ligase from Blochmanniella floridana.